The sequence spans 1939 residues: Myosin-1 (1939 aa).

The Myosin N-terminal SH3-like domain maps to 33–82; that stretch reads DAKTSVFVAEPKESFVKGTVQSREGGKVTVKTEAGATLTVKEDQVFPMNP. 2 positions are modified to phosphothreonine: threonine 64 and threonine 69. The Myosin motor domain maps to 86 to 782; that stretch reads DKIEDMAMMT…LLGLLEEMRD (697 aa). An N6,N6,N6-trimethyllysine modification is found at lysine 130. An ATP-binding site is contributed by 179–186; sequence GESGAGKT. At tyrosine 389 the chain carries Phosphotyrosine. Serine 392 is modified (phosphoserine). At threonine 419 the chain carries Phosphothreonine. Tyrosine 424 carries the phosphotyrosine modification. Position 625 is a phosphoserine (serine 625). An actin-binding region spans residues 659-681; that stretch reads LNKLMTNLRSTHPHFVRCIIPNE. The residue at position 757 (histidine 757) is a Pros-methylhistidine. The segment at 761–775 is actin-binding; it reads KFGHTKVFFKAGLLG. One can recognise an IQ domain in the interval 785 to 814; it reads LAQLITRTQARCRGFLARVEYQKMVERRES. Residues 843–1939 are a coiled coil; the sequence is LLKSAETEKE…EVHTKIISEE (1097 aa). Phosphoserine is present on residues serine 1092 and serine 1096. Disordered regions lie at residues 1125-1147 and 1153-1172; these read EIEA…SREL and RLEE…KKRE. Positions 1128–1147 are enriched in basic and acidic residues; that stretch reads AERASRAKAEKQRSDLSREL. Phosphoserine occurs at positions 1162 and 1237. Position 1241 is a phosphothreonine (threonine 1241). Phosphoserine is present on serine 1243. Threonine 1255 carries the phosphothreonine modification. Serine 1261 is modified (phosphoserine). Phosphothreonine occurs at positions 1265 and 1286. Serine 1288, serine 1292, serine 1303, and serine 1306 each carry phosphoserine. The residue at position 1464 (tyrosine 1464) is a Phosphotyrosine. The residue at position 1467 (threonine 1467) is a Phosphothreonine. Serine 1474 is subject to Phosphoserine. Position 1492 is a phosphotyrosine (tyrosine 1492). Residue serine 1495 is modified to Phosphoserine. Threonine 1501 is modified (phosphothreonine). Serine 1514 is subject to Phosphoserine. Position 1517 is a phosphothreonine (threonine 1517). Serine 1554, serine 1574, serine 1600, serine 1603, serine 1714, and serine 1726 each carry phosphoserine. A phosphothreonine mark is found at threonine 1730 and threonine 1736. Serine 1739 bears the Phosphoserine mark.

It belongs to the TRAFAC class myosin-kinesin ATPase superfamily. Myosin family. As to quaternary structure, muscle myosin is a hexameric protein that consists of 2 heavy chain subunits (MHC), 2 alkali light chain subunits (MLC) and 2 regulatory light chain subunits (MLC-2). Interacts with SLC26A5.

It is found in the cytoplasm. The protein resides in the myofibril. Required for normal hearing. It plays a role in cochlear amplification of auditory stimuli, likely through the positive regulation of prestin (SLC26A5) activity and outer hair cell (OHC) electromotility. The sequence is that of Myosin-1 (MYH1) from Canis lupus familiaris (Dog).